The chain runs to 441 residues: tRNA(Ile)-lysidine synthase (441 aa).

28 to 33 (SGGTDS) is a binding site for ATP.

Belongs to the tRNA(Ile)-lysidine synthase family.

The protein localises to the cytoplasm. It catalyses the reaction cytidine(34) in tRNA(Ile2) + L-lysine + ATP = lysidine(34) in tRNA(Ile2) + AMP + diphosphate + H(+). Ligates lysine onto the cytidine present at position 34 of the AUA codon-specific tRNA(Ile) that contains the anticodon CAU, in an ATP-dependent manner. Cytidine is converted to lysidine, thus changing the amino acid specificity of the tRNA from methionine to isoleucine. In Orientia tsutsugamushi (strain Boryong) (Rickettsia tsutsugamushi), this protein is tRNA(Ile)-lysidine synthase.